A 282-amino-acid chain; its full sequence is D-alanine aminotransferase (282 aa).

Y32 lines the substrate pocket. Position 51 (R51) interacts with pyridoxal 5'-phosphate. Residues R99 and H101 each contribute to the substrate site. The Proton acceptor role is filled by K146. An N6-(pyridoxal phosphate)lysine modification is found at K146. E178 provides a ligand contact to pyridoxal 5'-phosphate.

It belongs to the class-IV pyridoxal-phosphate-dependent aminotransferase family. Homodimer. Requires pyridoxal 5'-phosphate as cofactor.

The catalysed reaction is D-alanine + 2-oxoglutarate = D-glutamate + pyruvate. In terms of biological role, acts on the D-isomers of alanine, leucine, aspartate, glutamate, aminobutyrate, norvaline and asparagine. The enzyme transfers an amino group from a substrate D-amino acid to the pyridoxal phosphate cofactor to form pyridoxamine and an alpha-keto acid in the first half-reaction. The second half-reaction is the reverse of the first, transferring the amino group from the pyridoxamine to a second alpha-keto acid to form the product D-amino acid via a ping-pong mechanism. This is an important process in the formation of D-alanine and D-glutamate, which are essential bacterial cell wall components. This is D-alanine aminotransferase (dat) from Staphylococcus aureus (strain N315).